A 95-amino-acid polypeptide reads, in one-letter code: CRISPR-associated endoribonuclease Cas2 1 (95 aa).

D11 is a binding site for Mg(2+).

Belongs to the CRISPR-associated endoribonuclease Cas2 protein family. As to quaternary structure, homodimer, forms a heterotetramer with a Cas1 homodimer. Mg(2+) serves as cofactor.

Functionally, CRISPR (clustered regularly interspaced short palindromic repeat), is an adaptive immune system that provides protection against mobile genetic elements (viruses, transposable elements and conjugative plasmids). CRISPR clusters contain sequences complementary to antecedent mobile elements and target invading nucleic acids. CRISPR clusters are transcribed and processed into CRISPR RNA (crRNA). Functions as a ssRNA-specific endoribonuclease. Involved in the integration of spacer DNA into the CRISPR cassette. In Methanospirillum hungatei JF-1 (strain ATCC 27890 / DSM 864 / NBRC 100397 / JF-1), this protein is CRISPR-associated endoribonuclease Cas2 1.